A 290-amino-acid chain; its full sequence is GTPase Era (290 aa).

The Era-type G domain occupies 2 to 169 (KSGFVSIIGR…KDKIYENLQE (168 aa)). The G1 stretch occupies residues 10-17 (GRPSTGKS). 10–17 (GRPSTGKS) contacts GTP. The segment at 36–40 (QTTRN) is G2. The segment at 57 to 60 (DTPG) is G3. GTP is bound by residues 57 to 61 (DTPGF) and 119 to 122 (NKID). The interval 119–122 (NKID) is G4. The interval 148-150 (ISA) is G5. The KH type-2 domain maps to 200-276 (LKEELPYSLY…DLFLQVKLRK (77 aa)).

The protein belongs to the TRAFAC class TrmE-Era-EngA-EngB-Septin-like GTPase superfamily. Era GTPase family. Monomer.

The protein localises to the cytoplasm. It localises to the cell inner membrane. An essential GTPase that binds both GDP and GTP, with rapid nucleotide exchange. Plays a role in 16S rRNA processing and 30S ribosomal subunit biogenesis and possibly also in cell cycle regulation and energy metabolism. This chain is GTPase Era, found in Borrelia turicatae (strain 91E135).